Consider the following 65-residue polypeptide: Small, acid-soluble spore protein H 3 (65 aa).

It belongs to the SspH family.

It localises to the spore core. This is Small, acid-soluble spore protein H 3 from Geobacillus thermodenitrificans (strain NG80-2).